The sequence spans 182 residues: U1 small nuclear ribonucleoprotein C (182 aa).

The segment at 4–36 adopts a Matrin-type zinc-finger fold; the sequence is YLCDYCQVWLTHDSQSVRKAHNAGRAHIQNVQD. The tract at residues 129 to 182 is disordered; that stretch reads PQTTASSNTQLTQQQQSLPQTNEHQRARTHSNANNHFTKTHHQGQRSHQRFVRA. Positions 130–150 are enriched in low complexity; the sequence is QTTASSNTQLTQQQQSLPQTN. Positions 166 to 182 are enriched in basic residues; the sequence is TKTHHQGQRSHQRFVRA.

The protein belongs to the U1 small nuclear ribonucleoprotein C family. As to quaternary structure, U1 snRNP is composed of the 7 core Sm proteins smb1, smd1, smd2, smd3, sme1, smf1 and smg1 (Sm proteins B, D1, D2, D3, E, F and G, respectively) that assemble in a heptameric protein ring on the Sm site of the small nuclear RNA to form the core snRNP, and at least 9 U1 snRNP-specific proteins usp101/U1-70K, usp102/U1-A, usp103/U1-C, usp106/LUC7, usp105/PRP39, usp104/PRP40, usp107/U1-H, usp108/U1-J and usp109/U1-L. usp103/U1-C interacts with U1 snRNA and the 5' splice-site region of the pre-mRNA.

It localises to the nucleus. Functionally, component of the spliceosomal U1 snRNP, which is essential for recognition of the pre-mRNA 5' splice-site and the subsequent assembly of the spliceosome. usp103/U1-C is directly involved in initial 5' splice-site recognition for both constitutive and regulated alternative splicing. The interaction with the 5' splice-site seems to precede base-pairing between the pre-mRNA and the U1 snRNA. Stimulates commitment or early (E) complex formation by stabilizing the base pairing of the 5' end of the U1 snRNA and the 5' splice-site region. This is U1 small nuclear ribonucleoprotein C (usp103) from Schizosaccharomyces pombe (strain 972 / ATCC 24843) (Fission yeast).